The chain runs to 311 residues: DNA-directed RNA polymerase subunit alpha (311 aa).

The segment at Met1–Asp227 is alpha N-terminal domain (alpha-NTD). The interval Asp239–Asp311 is alpha C-terminal domain (alpha-CTD).

Belongs to the RNA polymerase alpha chain family. In plastids the minimal PEP RNA polymerase catalytic core is composed of four subunits: alpha, beta, beta', and beta''. When a (nuclear-encoded) sigma factor is associated with the core the holoenzyme is formed, which can initiate transcription.

The protein localises to the plastid. Its subcellular location is the chloroplast. The catalysed reaction is RNA(n) + a ribonucleoside 5'-triphosphate = RNA(n+1) + diphosphate. Its function is as follows. DNA-dependent RNA polymerase catalyzes the transcription of DNA into RNA using the four ribonucleoside triphosphates as substrates. The protein is DNA-directed RNA polymerase subunit alpha of Pyropia yezoensis (Susabi-nori).